The primary structure comprises 370 residues: Galanin receptor type 3 (370 aa).

The Extracellular portion of the chain corresponds to 1–20 (MADIQNISLDSPGSVGAVAV). N-linked (GlcNAc...) asparagine glycosylation occurs at Asn6. The chain crosses the membrane as a helical span at residues 21 to 41 (PVVFALIFLLGMVGNGLVLAV). Over 42-57 (LLQPGPSAWQEPGSTT) the chain is Cytoplasmic. The chain crosses the membrane as a helical span at residues 58-78 (DLFILNLAVADLCFILCCVPF). The Extracellular portion of the chain corresponds to 79-96 (QAAIYTLDAWLFGAFVCK). Cys95 and Cys172 are joined by a disulfide. Residues 97-118 (TVHLLIYLTMYASSFTLAAVSV) form a helical membrane-spanning segment. Residues 119-138 (DRYLAVRHPLRSRALRTPRN) are Cytoplasmic-facing. The chain crosses the membrane as a helical span at residues 139–159 (ARAAVGLVWLLAALFSAPYLS). Topologically, residues 160 to 184 (YYGTVRYGALELCVPAWEDARRRAL) are extracellular. A helical transmembrane segment spans residues 185–205 (DVATFAAGYLLPVTVVSLAYG). The Cytoplasmic segment spans residues 206–236 (RTLCFLWAAVGPAGAAAAEARRRATGRAGRA). The chain crosses the membrane as a helical span at residues 237 to 257 (MLTVAALYALCWGPHHALILC). Residues 258–259 (FW) lie on the Extracellular side of the membrane. The chain crosses the membrane as a helical span at residues 260–280 (YGRFAFSPATYACRLASHCLA). Residues 281-370 (YANSCLNPLV…RLTLSARGPQ (90 aa)) lie on the Cytoplasmic side of the membrane. Cys308 is lipidated: S-palmitoyl cysteine. Positions 328 to 370 (QPASSGPAGYPGDARPRGWSMEPRGDALRGGETRLTLSARGPQ) are disordered. Residues 350-359 (PRGDALRGGE) are compositionally biased toward basic and acidic residues.

It belongs to the G-protein coupled receptor 1 family.

Its subcellular location is the cell membrane. Functionally, receptor for the hormone galanin and spexin-1. In Mus musculus (Mouse), this protein is Galanin receptor type 3 (Galr3).